The primary structure comprises 335 residues: Luciferase-like monooxygenase (335 aa).

To bacterial alkanal monooxygenase alpha and beta chains.

The polypeptide is Luciferase-like monooxygenase (yhbW) (Escherichia coli O6:H1 (strain CFT073 / ATCC 700928 / UPEC)).